Consider the following 563-residue polypeptide: Dihydroxy-acid dehydratase (563 aa).

Cys-51 is a binding site for [2Fe-2S] cluster. Asp-83 is a Mg(2+) binding site. A [2Fe-2S] cluster-binding site is contributed by Cys-124. Residues Asp-125 and Lys-126 each contribute to the Mg(2+) site. Residue Lys-126 is modified to N6-carboxylysine. Cys-196 is a [2Fe-2S] cluster binding site. Glu-448 serves as a coordination point for Mg(2+). Catalysis depends on Ser-474, which acts as the Proton acceptor.

The protein belongs to the IlvD/Edd family. As to quaternary structure, homodimer. It depends on [2Fe-2S] cluster as a cofactor. Mg(2+) is required as a cofactor.

The enzyme catalyses (2R)-2,3-dihydroxy-3-methylbutanoate = 3-methyl-2-oxobutanoate + H2O. It catalyses the reaction (2R,3R)-2,3-dihydroxy-3-methylpentanoate = (S)-3-methyl-2-oxopentanoate + H2O. It functions in the pathway amino-acid biosynthesis; L-isoleucine biosynthesis; L-isoleucine from 2-oxobutanoate: step 3/4. Its pathway is amino-acid biosynthesis; L-valine biosynthesis; L-valine from pyruvate: step 3/4. Its function is as follows. Functions in the biosynthesis of branched-chain amino acids. Catalyzes the dehydration of (2R,3R)-2,3-dihydroxy-3-methylpentanoate (2,3-dihydroxy-3-methylvalerate) into 2-oxo-3-methylpentanoate (2-oxo-3-methylvalerate) and of (2R)-2,3-dihydroxy-3-methylbutanoate (2,3-dihydroxyisovalerate) into 2-oxo-3-methylbutanoate (2-oxoisovalerate), the penultimate precursor to L-isoleucine and L-valine, respectively. This is Dihydroxy-acid dehydratase from Polynucleobacter necessarius subsp. necessarius (strain STIR1).